We begin with the raw amino-acid sequence, 539 residues long: GMP synthase [glutamine-hydrolyzing] (539 aa).

The Glutamine amidotransferase type-1 domain maps to 4–202; it reads KILILDFGSQ…VLGICRAKAD (199 aa). The active-site Nucleophile is cysteine 81. Active-site residues include histidine 176 and glutamate 178. One can recognise a GMPS ATP-PPase domain in the interval 203 to 395; the sequence is WVMKDHIEEA…LGLPPEMVYR (193 aa). 230 to 236 is a binding site for ATP; sequence SGGVDSS.

In terms of assembly, homodimer.

The catalysed reaction is XMP + L-glutamine + ATP + H2O = GMP + L-glutamate + AMP + diphosphate + 2 H(+). Its pathway is purine metabolism; GMP biosynthesis; GMP from XMP (L-Gln route): step 1/1. Functionally, catalyzes the synthesis of GMP from XMP. The chain is GMP synthase [glutamine-hydrolyzing] from Cupriavidus pinatubonensis (strain JMP 134 / LMG 1197) (Cupriavidus necator (strain JMP 134)).